We begin with the raw amino-acid sequence, 415 residues long: uncharacterized protein (415 aa).

Residues 1 to 55 (MSTGTVTIDRLGAQGDGVARTEAGPVFAPFTLPGETVSLAVNKANGTLISLKEAS) enclose the TRAM domain. [4Fe-4S] cluster-binding residues include C63, C75, C78, and C152. Positions 252, 279, 299, and 347 each coordinate S-adenosyl-L-methionine. C373 serves as the catalytic Nucleophile.

This sequence belongs to the class I-like SAM-binding methyltransferase superfamily. RNA M5U methyltransferase family.

This is an uncharacterized protein from Rhizobium meliloti (strain 1021) (Ensifer meliloti).